Reading from the N-terminus, the 485-residue chain is Aspartyl/glutamyl-tRNA(Asn/Gln) amidotransferase subunit B (485 aa).

Belongs to the GatB/GatE family. GatB subfamily. Heterotrimer of A, B and C subunits.

The catalysed reaction is L-glutamyl-tRNA(Gln) + L-glutamine + ATP + H2O = L-glutaminyl-tRNA(Gln) + L-glutamate + ADP + phosphate + H(+). It catalyses the reaction L-aspartyl-tRNA(Asn) + L-glutamine + ATP + H2O = L-asparaginyl-tRNA(Asn) + L-glutamate + ADP + phosphate + 2 H(+). Its function is as follows. Allows the formation of correctly charged Asn-tRNA(Asn) or Gln-tRNA(Gln) through the transamidation of misacylated Asp-tRNA(Asn) or Glu-tRNA(Gln) in organisms which lack either or both of asparaginyl-tRNA or glutaminyl-tRNA synthetases. The reaction takes place in the presence of glutamine and ATP through an activated phospho-Asp-tRNA(Asn) or phospho-Glu-tRNA(Gln). The sequence is that of Aspartyl/glutamyl-tRNA(Asn/Gln) amidotransferase subunit B from Borreliella afzelii (strain PKo) (Borrelia afzelii).